Consider the following 296-residue polypeptide: Nucleotide-binding protein SPJ_1472 (296 aa).

13–20 (GMSGAGKT) is an ATP binding site. Position 63 to 66 (63 to 66 (DMRS)) interacts with GTP.

The protein belongs to the RapZ-like family.

Its function is as follows. Displays ATPase and GTPase activities. This Streptococcus pneumoniae (strain JJA) protein is Nucleotide-binding protein SPJ_1472.